A 65-amino-acid polypeptide reads, in one-letter code: Hainantoxin-X.2 (65 aa).

Positions 1 to 20 are cleaved as a signal peptide; that stretch reads MNVKILVLVAVLCLVVSTHA. Positions 21 to 37 are excised as a propeptide; that stretch reads ERHSKTDMEDSPMIQER. 3 cysteine pairs are disulfide-bonded: Cys-39–Cys-56, Cys-46–Cys-59, and Cys-55–Cys-64.

This sequence belongs to the neurotoxin 36 family. 02 subfamily. In terms of tissue distribution, expressed by the venom gland.

The protein resides in the secreted. Reversibly blocks N-type calcium channels (Cav2.2/CACNA1B) in rat dorsal root ganglion cells. Elicits no toxic symptoms in either vertebrates or invertebrates during a period of 48 hours post-injection, when it was assayed in vivo by direct injection into mice and cockroaches. The polypeptide is Hainantoxin-X.2 (Cyriopagopus hainanus (Chinese bird spider)).